The chain runs to 525 residues: GMP synthase [glutamine-hydrolyzing] (525 aa).

Residues 9 to 207 form the Glutamine amidotransferase type-1 domain; that stretch reads RILILDFGSQ…VLGICGCEAL (199 aa). Cys86 functions as the Nucleophile in the catalytic mechanism. Catalysis depends on residues His181 and Glu183. One can recognise a GMPS ATP-PPase domain in the interval 208-400; sequence WTSATIIEDA…LGLPYDMLYR (193 aa). 235–241 contributes to the ATP binding site; it reads SGGVDSS.

In terms of assembly, homodimer.

It catalyses the reaction XMP + L-glutamine + ATP + H2O = GMP + L-glutamate + AMP + diphosphate + 2 H(+). It participates in purine metabolism; GMP biosynthesis; GMP from XMP (L-Gln route): step 1/1. Functionally, catalyzes the synthesis of GMP from XMP. The protein is GMP synthase [glutamine-hydrolyzing] of Yersinia pestis bv. Antiqua (strain Antiqua).